A 593-amino-acid chain; its full sequence is Isocitrate dehydrogenase kinase/phosphatase (593 aa).

Residues 315–321 (APGIRGM) and Lys-336 contribute to the ATP site. The active site involves Asp-371.

This sequence belongs to the AceK family.

The protein resides in the cytoplasm. It carries out the reaction L-seryl-[isocitrate dehydrogenase] + ATP = O-phospho-L-seryl-[isocitrate dehydrogenase] + ADP + H(+). Bifunctional enzyme which can phosphorylate or dephosphorylate isocitrate dehydrogenase (IDH) on a specific serine residue. This is a regulatory mechanism which enables bacteria to bypass the Krebs cycle via the glyoxylate shunt in response to the source of carbon. When bacteria are grown on glucose, IDH is fully active and unphosphorylated, but when grown on acetate or ethanol, the activity of IDH declines drastically concomitant with its phosphorylation. This is Isocitrate dehydrogenase kinase/phosphatase from Salmonella typhi.